A 345-amino-acid chain; its full sequence is Biotin synthase (345 aa).

A Radical SAM core domain is found at 38–256 (GEVQVSTLLS…IAVARIMMPR (219 aa)). Residues C53, C57, and C60 each coordinate [4Fe-4S] cluster. Residues C97, C128, C188, and R260 each coordinate [2Fe-2S] cluster.

This sequence belongs to the radical SAM superfamily. Biotin synthase family. Homodimer. Requires [4Fe-4S] cluster as cofactor. [2Fe-2S] cluster serves as cofactor.

The catalysed reaction is (4R,5S)-dethiobiotin + (sulfur carrier)-SH + 2 reduced [2Fe-2S]-[ferredoxin] + 2 S-adenosyl-L-methionine = (sulfur carrier)-H + biotin + 2 5'-deoxyadenosine + 2 L-methionine + 2 oxidized [2Fe-2S]-[ferredoxin]. It participates in cofactor biosynthesis; biotin biosynthesis; biotin from 7,8-diaminononanoate: step 2/2. Catalyzes the conversion of dethiobiotin (DTB) to biotin by the insertion of a sulfur atom into dethiobiotin via a radical-based mechanism. The sequence is that of Biotin synthase from Sodalis glossinidius (strain morsitans).